The primary structure comprises 121 residues: Large ribosomal subunit protein bL19 (121 aa).

Belongs to the bacterial ribosomal protein bL19 family.

In terms of biological role, this protein is located at the 30S-50S ribosomal subunit interface and may play a role in the structure and function of the aminoacyl-tRNA binding site. The chain is Large ribosomal subunit protein bL19 from Borrelia garinii subsp. bavariensis (strain ATCC BAA-2496 / DSM 23469 / PBi) (Borreliella bavariensis).